The sequence spans 247 residues: Orotidine 5'-phosphate decarboxylase (247 aa).

Residues Asp-21, Lys-43, 70-79, Thr-129, Arg-190, Gln-199, Gly-219, and Arg-220 each bind substrate; that span reads DMKFHDIPNT. Lys-72 serves as the catalytic Proton donor.

This sequence belongs to the OMP decarboxylase family. Type 1 subfamily. Homodimer.

It carries out the reaction orotidine 5'-phosphate + H(+) = UMP + CO2. It functions in the pathway pyrimidine metabolism; UMP biosynthesis via de novo pathway; UMP from orotate: step 2/2. Catalyzes the decarboxylation of orotidine 5'-monophosphate (OMP) to uridine 5'-monophosphate (UMP). This Chromobacterium violaceum (strain ATCC 12472 / DSM 30191 / JCM 1249 / CCUG 213 / NBRC 12614 / NCIMB 9131 / NCTC 9757 / MK) protein is Orotidine 5'-phosphate decarboxylase.